An 828-amino-acid polypeptide reads, in one-letter code: Multiple RNA-binding domain-containing protein 1 (828 aa).

One can recognise an RRM 1 domain in the interval 2 to 89 (SRLIVKNLPP…TKISVAVAMT (88 aa)). 2 disordered regions span residues 97–125 (LSSRERKRQAAQRAREDAEDDREAKKARY) and 166–293 (DAGA…EDPT). Acidic residues-rich tracts occupy residues 195–207 (DEIDEDEDEEEES) and 214–227 (DNEEAEEDEEDPVI). A compositionally biased stretch (basic and acidic residues) spans 241 to 272 (DWLRQRQTRIKEGEPEEDRENRHTESKSEGKK). 4 consecutive RRM domains span residues 301–379 (GRLF…PGKP), 485–557 (RVIL…KGPK), 605–688 (TSVF…ISNR), and 703–780 (SKIL…YAQA).

It belongs to the RRM MRD1 family.

It localises to the nucleus. In terms of biological role, involved in pre-rRNA processing. This chain is Multiple RNA-binding domain-containing protein 1 (MRD1), found in Yarrowia lipolytica (strain CLIB 122 / E 150) (Yeast).